Reading from the N-terminus, the 222-residue chain is LexA repressor (222 aa).

The H-T-H motif DNA-binding region spans 28 to 48 (IREIGEHMDIRSTNGVNDHLK). Active-site for autocatalytic cleavage activity residues include serine 135 and lysine 172.

This sequence belongs to the peptidase S24 family. In terms of assembly, homodimer.

The catalysed reaction is Hydrolysis of Ala-|-Gly bond in repressor LexA.. Represses a number of genes involved in the response to DNA damage (SOS response), including recA and lexA. In the presence of single-stranded DNA, RecA interacts with LexA causing an autocatalytic cleavage which disrupts the DNA-binding part of LexA, leading to derepression of the SOS regulon and eventually DNA repair. The chain is LexA repressor from Myxococcus xanthus (strain DK1622).